The sequence spans 95 residues: Small ribosomal subunit protein bS6 (95 aa).

The protein belongs to the bacterial ribosomal protein bS6 family.

Functionally, binds together with bS18 to 16S ribosomal RNA. The sequence is that of Small ribosomal subunit protein bS6 from Bacillus velezensis (strain DSM 23117 / BGSC 10A6 / LMG 26770 / FZB42) (Bacillus amyloliquefaciens subsp. plantarum).